Consider the following 81-residue polypeptide: Putative membrane protein insertion efficiency factor (81 aa).

Residues 61–81 (NDGGFDPVPPAPSSRTSSIAE) are disordered.

It belongs to the UPF0161 family.

The protein resides in the cell inner membrane. In terms of biological role, could be involved in insertion of integral membrane proteins into the membrane. This Pseudomonas putida (strain ATCC 700007 / DSM 6899 / JCM 31910 / BCRC 17059 / LMG 24140 / F1) protein is Putative membrane protein insertion efficiency factor.